Here is a 654-residue protein sequence, read N- to C-terminus: Endoplasmic reticulum chaperone BiP (654 aa).

Positions 1-18 are cleaved as a signal peptide; sequence MKLSLVAAVLLLLCAARA. Residues 1 to 80 are required for interaction with ELAPOR1; sequence MKLSLVAAVL…EGERLIGDAA (80 aa). 36 to 39 provides a ligand contact to ATP; sequence GTTY. Ser86 is subject to Phosphoserine. Lys96 serves as a coordination point for ATP. At Lys125 the chain carries N6-acetyllysine. Residues 125–280 are nucleotide-binding (NBD); that stretch reads KPYIQVDIGG…KKKTGKDVRK (156 aa). Position 160 is a 3'-nitrotyrosine (Tyr160). Lys213 bears the N6-acetyllysine mark. 227-229 contacts ATP; it reads GGT. Lys271 carries the post-translational modification N6-acetyllysine. 293–300 lines the ATP pocket; sequence EKAKRALS. The residue at position 326 (Lys326) is an N6-acetyllysine. Lys352 is covalently cross-linked (Glycyl lysine isopeptide (Lys-Gly) (interchain with G-Cter in SUMO2)). Lys353 carries the post-translational modification N6-acetyllysine; alternate. Lys353 is covalently cross-linked (Glycyl lysine isopeptide (Lys-Gly) (interchain with G-Cter in SUMO1); alternate). 364 to 367 contributes to the ATP binding site; it reads GSTR. The interval 409–419 is interdomain linker; that stretch reads QDTGDLVLLDV. The segment at 420–500 is substrate-binding (SBD); the sequence is CPLTLGIETV…PRGVPQIEVT (81 aa). Lys447 is modified (N6-succinyllysine). At Arg492 the chain carries Omega-N-methylarginine. Thr518 bears the O-AMP-threonine; alternate mark. At Thr518 the chain carries Phosphothreonine; alternate. Lys585 carries the post-translational modification N6,N6,N6-trimethyllysine; by METTL21A; in vitro. Residue Lys585 is modified to N6,N6-dimethyllysine; alternate. Residue Lys585 is modified to N6-methyllysine; alternate. The residue at position 591 (Lys591) is an N6-methyllysine. Residues 632–654 are disordered; it reads SKLYGSAGPPPTGEEDTSERDEL. Phosphothreonine is present on residues Thr643 and Thr648. Over residues 644-654 the composition is skewed to acidic residues; that stretch reads GEEDTSERDEL. The residue at position 649 (Ser649) is a Phosphoserine. The Prevents secretion from ER motif lies at 651–654; the sequence is RDEL.

Belongs to the heat shock protein 70 family. In terms of assembly, monomer and homooligomer; homooligomerization via the interdomain linker inactivates the chaperone activity and acts as a storage of HSPA5/BiP molecules. Interacts with DNAJC1 (via J domain). Component of an EIF2 complex at least composed of CELF1/CUGBP1, CALR, CALR3, EIF2S1, EIF2S2, HSP90B1 and HSPA5. Part of a large chaperone multiprotein complex comprising DNAJB11, HSP90B1, HSPA5, HYOU, PDIA2, PDIA4, PDIA6, PPIB, SDF2L1, UGGT1 and very small amounts of ERP29, but not, or at very low levels, CALR nor CANX. Interacts with TMEM132A and TRIM21. May form a complex with ERLEC1, OS9, SEL1L and SYVN1. Interacts with DNAJC10. Interacts with DNAJB9/ERdj4; leading to recruit HSPA5/BiP to ERN1/IRE1. Interacts with ERN1/IRE1 (via luminal domain); the interaction takes place following interaction with DNAJB9/ERdj4 and leads to inactivate ERN1/IRE1, the interaction also competitively inhibits ERN1 interaction with MANF. Interacts directly with MANF (via SAP domain); the interaction inhibits ATP binding to HSPA5/BiP and subsequent nucleotide exchange. Interacts with EIF2AK3/PERK (via luminal domain); interaction leads to inactivate EIF2AK3/PERK. Interacts with MX1. Interacts with METTL23. Interacts with CEMIP; the interaction induces calcium leakage from the endoplasmic reticulum and cell migration. Interacts with PCSK4 form; the interaction takes place in the endoplasmic reticulum. Interacts with CIPC. Interacts with CCDC88B (via C-terminus); the interaction opposes ERN1-mediated JNK activation, protecting against apoptosis. Interacts with INPP5K; necessary for INPP5K localization at the endoplasmic reticulum. Interacts with MANF; the interaction is direct. Interacts with LOXL2; leading to activate the ERN1/IRE1-XBP1 pathway of the unfolded protein response. Interacts with CLU under stressed condition; interaction increases CLU protein stability; facilitates its retrotranslocation and redistribution to the mitochondria; cooperatively suppress stress-induced apoptosis by stabilizing mitochondrial membrane integrity. Interacts with CCDC47. Interacts with CLN3. Interacts with ELAPOR1; may regulate the function of HSPA5 in apoptosis and cell proliferation. Interacts with CASP7. Interacts with ILDR2; the interaction stabilizes ILDR2 expression. Interacts with ADAM7. In terms of processing, in unstressed cells, AMPylation at Thr-518 by FICD inactivates the chaperome activity: AMPylated form is locked in a relatively inert state and only weakly stimulated by J domain-containing proteins. In response to endoplasmic reticulum stress, de-AMPylation by the same protein, FICD, restores the chaperone activity.

It localises to the endoplasmic reticulum lumen. It is found in the melanosome. The protein localises to the cytoplasm. Its subcellular location is the cell surface. It catalyses the reaction ATP + H2O = ADP + phosphate + H(+). The chaperone activity is regulated by ATP-induced allosteric coupling of the nucleotide-binding (NBD) and substrate-binding (SBD) domains. In the ADP-bound and nucleotide-free (apo) states, the two domains have little interaction. In contrast, in the ATP-bound state the two domains are tightly coupled, which results in drastically accelerated kinetics in both binding and release of polypeptide substrates. J domain-containing co-chaperones (DNAJB9/ERdj4 or DNAJC10/ERdj5) stimulate the ATPase activity and are required for efficient substrate recognition by HSPA5/BiP. Homooligomerization inactivates participating HSPA5/BiP protomers and probably act as reservoirs to store HSPA5/BiP molecules when they are not needed by the cell. Endoplasmic reticulum chaperone that plays a key role in protein folding and quality control in the endoplasmic reticulum lumen. Involved in the correct folding of proteins and degradation of misfolded proteins via its interaction with DNAJC10/ERdj5, probably to facilitate the release of DNAJC10/ERdj5 from its substrate. Acts as a key repressor of the EIF2AK3/PERK and ERN1/IRE1-mediated unfolded protein response (UPR). In the unstressed endoplasmic reticulum, recruited by DNAJB9/ERdj4 to the luminal region of ERN1/IRE1, leading to disrupt the dimerization of ERN1/IRE1, thereby inactivating ERN1/IRE1. Also binds and inactivates EIF2AK3/PERK in unstressed cells. Accumulation of misfolded protein in the endoplasmic reticulum causes release of HSPA5/BiP from ERN1/IRE1 and EIF2AK3/PERK, allowing their homodimerization and subsequent activation. Plays an auxiliary role in post-translational transport of small presecretory proteins across endoplasmic reticulum (ER). May function as an allosteric modulator for SEC61 channel-forming translocon complex, likely cooperating with SEC62 to enable the productive insertion of these precursors into SEC61 channel. Appears to specifically regulate translocation of precursors having inhibitory residues in their mature region that weaken channel gating. May also play a role in apoptosis and cell proliferation. The chain is Endoplasmic reticulum chaperone BiP from Ictidomys tridecemlineatus (Thirteen-lined ground squirrel).